A 295-amino-acid polypeptide reads, in one-letter code: Trimeric intracellular cation channel type A (295 aa).

The Lumenal portion of the chain corresponds to 1–11; it reads MELLSALSLDD. A helical transmembrane segment spans residues 12–32; that stretch reads LAVAFSKLPVFPLFDVAYYII. At 33 to 51 the chain is on the cytoplasmic side; the sequence is SILYLKYEPGAVDLSKRSP. Residues 52 to 72 traverse the membrane as a helical segment; it reads VASWLCAMLYCFGSYILADVL. The Lumenal portion of the chain corresponds to 73 to 84; the sequence is LGESPIHYFSNN. Glycine 74 contributes to the Ca(2+) binding site. Residues 85-105 form a helical membrane-spanning segment; that stretch reads ANILLASAVWYLTFFCPLNIF. Topologically, residues 106–144 are cytoplasmic; sequence YKIVSFLPLKLVLVGMKEVVRVRKIAMGIHHAHHHYHHG. A 1,2-diacyl-sn-glycero-3-phospho-(1D-myo-inositol-4,5-bisphosphate) contacts are provided by lysine 122 and arginine 126. The helical transmembrane segment at 145 to 165 threads the bilayer; it reads WVIMVLIGWVKGSGVALMSNL. Residues 166–178 are Lumenal-facing; that stretch reads EQLLRGVWKPETN. A helical transmembrane segment spans residues 179–199; the sequence is EILHMSFPTKASLYGAILFTL. Topologically, residues 200 to 201 are cytoplasmic; that stretch reads QQ. The helical transmembrane segment at 202–222 threads the bilayer; that stretch reads AHWLPISKAYLIFFFTLFMAI. Over 223 to 233 the chain is Lumenal; sequence CKIYMTATHSH. A helical membrane pass occupies residues 234–254; that stretch reads GSPFAIFESGICCVLFGAANG. At 255 to 295 the chain is on the cytoplasmic side; sequence DHDDHGDHHHHHDDHDVSHSTVKSKEELNEGTRKRKTKKAE. Residues 259–286 show a composition bias toward basic and acidic residues; it reads HGDHHHHHDDHDVSHSTVKSKEELNEGT. Residues 259-295 form a disordered region; sequence HGDHHHHHDDHDVSHSTVKSKEELNEGTRKRKTKKAE.

Belongs to the TMEM38 family. In terms of assembly, homotrimer; conformation seems to be controled by binding to diacylglycerol (DAG).

Its subcellular location is the sarcoplasmic reticulum membrane. The protein resides in the nucleus membrane. The catalysed reaction is K(+)(in) = K(+)(out). With respect to regulation, channel activity is activated by a change of voltage within the sarcoplasmic reticulum lumen and blocked by luminal high Ca(2+) levels. Functionally, intracellular monovalent cation channel required for maintenance of rapid intracellular calcium release. Acts as a potassium counter-ion channel that functions in synchronization with calcium release from intracellular stores. Opened by a change of voltage within the sarcoplasmic reticulum lumen. The protein is Trimeric intracellular cation channel type A (tmem38a) of Xenopus tropicalis (Western clawed frog).